We begin with the raw amino-acid sequence, 105 residues long: Small ribosomal subunit protein eS24 (105 aa).

The disordered stretch occupies residues 86–105; that stretch reads LERNKIEADEEADEEAAEEA. Residues 93-105 show a composition bias toward acidic residues; that stretch reads ADEEADEEAAEEA.

Belongs to the eukaryotic ribosomal protein eS24 family.

This Natronomonas pharaonis (strain ATCC 35678 / DSM 2160 / CIP 103997 / JCM 8858 / NBRC 14720 / NCIMB 2260 / Gabara) (Halobacterium pharaonis) protein is Small ribosomal subunit protein eS24.